Here is a 35-residue protein sequence, read N- to C-terminus: Cycloamanide F proprotein (35 aa).

Residues 1 to 10 constitute a propeptide that is removed on maturation; the sequence is MSDINATRLP. The segment at residues 11–18 is a cross-link (cyclopeptide (Ile-Pro)); sequence IVGILGLP. A propeptide spanning residues 19-35 is cleaved from the precursor; the sequence is CIGDDVNSTLTHGEDLC.

This sequence belongs to the MSDIN fungal toxin family. Post-translationally, processed by the macrocyclase-peptidase enzyme POPB to yield a cyclic decapeptide. POPB first removes 10 residues from the N-terminus. Conformational trapping of the remaining peptide forces the enzyme to release this intermediate rather than proceed to macrocyclization. The enzyme rebinds the remaining peptide in a different conformation and catalyzes macrocyclization of the N-terminal 8 residues.

Cyclic octapeptide that belongs to the MSDIN-like toxin family responsible for a large number of food poisoning cases and deaths. Cycloaminide E is structurally related to other cycloamanides that are non-toxic to mammals but show immunosuppressive activity. This Amanita phalloides (Death cap) protein is Cycloamanide F proprotein.